The primary structure comprises 251 residues: Pyridoxine 5'-phosphate synthase (251 aa).

Asn-8 and Arg-19 together coordinate 3-amino-2-oxopropyl phosphate. His-44 functions as the Proton acceptor in the catalytic mechanism. 1-deoxy-D-xylulose 5-phosphate contacts are provided by Arg-46 and His-51. Glu-76 functions as the Proton acceptor in the catalytic mechanism. Thr-106 is a 1-deoxy-D-xylulose 5-phosphate binding site. Residue His-200 is the Proton donor of the active site. 3-amino-2-oxopropyl phosphate is bound by residues Asp-201 and 223-224 (GH).

The protein belongs to the PNP synthase family. Homooctamer; tetramer of dimers.

Its subcellular location is the cytoplasm. The catalysed reaction is 3-amino-2-oxopropyl phosphate + 1-deoxy-D-xylulose 5-phosphate = pyridoxine 5'-phosphate + phosphate + 2 H2O + H(+). It participates in cofactor biosynthesis; pyridoxine 5'-phosphate biosynthesis; pyridoxine 5'-phosphate from D-erythrose 4-phosphate: step 5/5. Catalyzes the complicated ring closure reaction between the two acyclic compounds 1-deoxy-D-xylulose-5-phosphate (DXP) and 3-amino-2-oxopropyl phosphate (1-amino-acetone-3-phosphate or AAP) to form pyridoxine 5'-phosphate (PNP) and inorganic phosphate. This chain is Pyridoxine 5'-phosphate synthase, found in Agrobacterium fabrum (strain C58 / ATCC 33970) (Agrobacterium tumefaciens (strain C58)).